The sequence spans 416 residues: UDP-N-acetylglucosamine 1-carboxyvinyltransferase (416 aa).

Phosphoenolpyruvate is bound at residue 22–23 (KN). UDP-N-acetyl-alpha-D-glucosamine is bound at residue Arg92. Cys116 functions as the Proton donor in the catalytic mechanism. Cys116 carries the post-translational modification 2-(S-cysteinyl)pyruvic acid O-phosphothioketal. UDP-N-acetyl-alpha-D-glucosamine is bound by residues 121–125 (RPVDQ), Asp304, and Ile326.

It belongs to the EPSP synthase family. MurA subfamily.

The protein localises to the cytoplasm. It catalyses the reaction phosphoenolpyruvate + UDP-N-acetyl-alpha-D-glucosamine = UDP-N-acetyl-3-O-(1-carboxyvinyl)-alpha-D-glucosamine + phosphate. The protein operates within cell wall biogenesis; peptidoglycan biosynthesis. Cell wall formation. Adds enolpyruvyl to UDP-N-acetylglucosamine. This is UDP-N-acetylglucosamine 1-carboxyvinyltransferase from Cupriavidus taiwanensis (strain DSM 17343 / BCRC 17206 / CCUG 44338 / CIP 107171 / LMG 19424 / R1) (Ralstonia taiwanensis (strain LMG 19424)).